The sequence spans 654 residues: Probable replication restart protein PriA (654 aa).

Residues Cys-367, Cys-370, Cys-376, Cys-379, Cys-395, Cys-398, Cys-407, and Cys-410 each contribute to the Zn(2+) site.

This sequence belongs to the helicase family. PriA subfamily. In terms of assembly, component of the replication restart primosome. It depends on Zn(2+) as a cofactor.

In terms of biological role, initiates the restart of stalled replication forks, which reloads the replicative helicase on sites other than the origin of replication. Recognizes and binds to abandoned replication forks and remodels them to uncover a helicase loading site. Promotes assembly of the primosome at these replication forks. The chain is Probable replication restart protein PriA from Mycobacterium tuberculosis (strain CDC 1551 / Oshkosh).